The following is a 143-amino-acid chain: Large ribosomal subunit protein uL11 (143 aa).

This sequence belongs to the universal ribosomal protein uL11 family. Part of the ribosomal stalk of the 50S ribosomal subunit. Interacts with L10 and the large rRNA to form the base of the stalk. L10 forms an elongated spine to which L12 dimers bind in a sequential fashion forming a multimeric L10(L12)X complex. One or more lysine residues are methylated.

In terms of biological role, forms part of the ribosomal stalk which helps the ribosome interact with GTP-bound translation factors. This Koribacter versatilis (strain Ellin345) protein is Large ribosomal subunit protein uL11.